The primary structure comprises 341 residues: Protein-glutamate methylesterase/protein-glutamine glutaminase 2 (341 aa).

The Response regulatory domain maps to 7–120 (KTLIVDDSLL…NRDLDSFFSE (114 aa)). A 4-aspartylphosphate modification is found at Asp-58. Positions 155–341 (VIAIGASTGG…QALYKLINQL (187 aa)) constitute a CheB-type methylesterase domain. Catalysis depends on residues Ser-161, His-187, and Asp-283.

It belongs to the CheB family. Phosphorylated by CheA. Phosphorylation of the N-terminal regulatory domain activates the methylesterase activity.

It is found in the cytoplasm. It carries out the reaction [protein]-L-glutamate 5-O-methyl ester + H2O = L-glutamyl-[protein] + methanol + H(+). The enzyme catalyses L-glutaminyl-[protein] + H2O = L-glutamyl-[protein] + NH4(+). Functionally, involved in chemotaxis. Part of a chemotaxis signal transduction system that modulates chemotaxis in response to various stimuli. Catalyzes the demethylation of specific methylglutamate residues introduced into the chemoreceptors (methyl-accepting chemotaxis proteins or MCP) by CheR. Also mediates the irreversible deamidation of specific glutamine residues to glutamic acid. The sequence is that of Protein-glutamate methylesterase/protein-glutamine glutaminase 2 from Syntrophomonas wolfei subsp. wolfei (strain DSM 2245B / Goettingen).